The primary structure comprises 526 residues: Tyrosine-protein kinase transforming protein Src (526 aa).

A disordered region spans residues 1-57 (MGSSKSKPKDPSQRRCSLEPPDSTHHGGFPASQTPNKTAAPDTHRTPSRSFGTVATE). The N-myristoyl glycine; by host moiety is linked to residue Gly-2. Positions 7–25 (KPKDPSQRRCSLEPPDSTH) are enriched in basic and acidic residues. The SH3 domain occupies 81 to 142 (GGVTTFVALY…PSNYVAPSDS (62 aa)). The 98-residue stretch at 148–245 (WYFGKITRRE…GLCHRLTNVC (98 aa)) folds into the SH2 domain. Residues 267-517 (LRLEVKLGQG…TFEYLQAQLL (251 aa)) enclose the Protein kinase domain. Residues 273-281 (LGQGCFGEV) and Lys-295 each bind ATP. Asp-386 functions as the Proton acceptor in the catalytic mechanism. Residue Tyr-416 is modified to Phosphotyrosine; by autocatalysis.

This sequence belongs to the protein kinase superfamily. Tyr protein kinase family. SRC subfamily. The phosphorylated form is termed pp60v-src.

The enzyme catalyses L-tyrosyl-[protein] + ATP = O-phospho-L-tyrosyl-[protein] + ADP + H(+). Its function is as follows. This phosphoprotein, required for both the initiation and the maintenance of neoplastic transformation, is a protein kinase that catalyzes the phosphorylation of tyrosine residues in vitro. The sequence is that of Tyrosine-protein kinase transforming protein Src (V-SRC) from Galliformes.